The sequence spans 279 residues: Isopentenyl-diphosphate delta-isomerase idi1 (279 aa).

Lysine 78 contributes to the substrate binding site. Residues histidine 82 and histidine 93 each coordinate Mg(2+). Residues leucine 91–leucine 249 enclose the Nudix hydrolase domain. Residues glutamine 111 and lysine 116 each coordinate substrate. Cysteine 128 is a catalytic residue. Residue serine 129 coordinates substrate. The Nudix box motif lies at serine 129 to glycine 162. 2 residues coordinate Mg(2+): glutamate 191 and glutamate 193. Glutamate 193 is an active-site residue.

The protein belongs to the IPP isomerase type 1 family. Mg(2+) serves as cofactor.

The catalysed reaction is isopentenyl diphosphate = dimethylallyl diphosphate. Its pathway is isoprenoid biosynthesis; dimethylallyl diphosphate biosynthesis; dimethylallyl diphosphate from isopentenyl diphosphate: step 1/1. Its function is as follows. Isopentenyl-diphosphate delta-isomerase; part of the second module of ergosterol biosynthesis pathway that includes the middle steps of the pathway. Idi1 catalyzes the 1,3-allylic rearrangement of isopentenyl (IPP) to its highly electrophilic allylic isomer, dimethylallyl diphosphate (DMAPP). The second module is carried out in the vacuole and involves the formation of farnesyl diphosphate, which is also an important intermediate in the biosynthesis of ubiquinone, dolichol, heme and prenylated proteins. Activity by the mevalonate kinase erg12 (AFUA_4G07780) first converts mevalonate into 5-phosphomevalonate. 5-phosphomevalonate is then further converted to 5-diphosphomevalonate by the phosphomevalonate kinase erg8 (AFUA_5G10680). The diphosphomevalonate decarboxylase mvd1 (AFUA_4G07130) then produces isopentenyl diphosphate. The isopentenyl-diphosphate delta-isomerase idi1 (AFUA_6G11160) then catalyzes the 1,3-allylic rearrangement of the homoallylic substrate isopentenyl (IPP) to its highly electrophilic allylic isomer, dimethylallyl diphosphate (DMAPP). Finally the farnesyl diphosphate synthase erg20 (AFUA_5G02450) catalyzes the sequential condensation of isopentenyl pyrophosphate with dimethylallyl pyrophosphate, and then with the resultant geranylpyrophosphate to the ultimate product farnesyl pyrophosphate. The chain is Isopentenyl-diphosphate delta-isomerase idi1 from Aspergillus fumigatus (strain ATCC MYA-4609 / CBS 101355 / FGSC A1100 / Af293) (Neosartorya fumigata).